The sequence spans 635 residues: Protein phosphatase PP2A regulatory subunit A (635 aa).

Residues 1 to 27 (MSGARSTTAGAVPSAATTSTTSTTSNS) show a composition bias toward low complexity. A disordered region spans residues 1 to 33 (MSGARSTTAGAVPSAATTSTTSTTSNSKDSDSN). HEAT repeat units lie at residues 34–72 (ESLYPLALLMDELKHDDIANRVEAMKKLDTIALALGPER), 73–111 (TRNELIPFLTEVAQDDEDEVFAVLAEQLGKFVPYIGGPQ), 112–150 (YATILLPVLEILASAEETLVREKAVDSLNNVAQELSQEQ), 151–189 (LFSDFVPLIEHLATADWFSSKVSACGLFKSVIVRIKDDS), 190–228 (LRKNILALYLQLAQDDTPMVKRAVGKNLPILIDLLTQNL), 229–273 (GLST…NAKG), 274–316 (DESH…SNQA), 317–356 (YIDELVQPFLNLCEDNEGDVREAVAKQVSGFAKFLNDPSI), 357–395 (ILNKILPAVQNLSMDESETVRSALASKITNIVLLLNKDQ), 396–434 (VINNFLPILLNMLRDEFPDVRLNIIASLKVVNDVIGIEL), 435–473 (LSDSLLPAITELAKDVNWRVRMAIIEYIPILAEQLGMQF), 474–512 (FDQQLSDLCLSWLWDTVYSIREAAVNNLKRLTEIFGSDW), 513–553 (CRDE…SLDV), 554–598 (VTEQ…YDAL), and 599–632 (IKNTILPSLQTLCQDEDVDVKYFAKKSLAECQEL).

The protein belongs to the phosphatase 2A regulatory subunit A family. As to quaternary structure, PP2A exists in several trimeric forms, all of which consist of a core composed of a catalytic subunit associated with a 65 kDa regulatory subunit (PR65) (subunit A). The core complex associates with a third, variable subunit (subunit B), which confers distinct properties to the holoenzyme.

Functionally, phosphatase 2A affects a variety of biological processes in the cell such as transcription, cell cycle progression and cellular morphogenesis, and provides an initial identification of critical substrates for this phosphatase. The regulatory subunit may direct the catalytic subunit to distinct, albeit overlapping, subsets of substrates. This is Protein phosphatase PP2A regulatory subunit A (TPD3) from Saccharomyces cerevisiae (strain ATCC 204508 / S288c) (Baker's yeast).